Reading from the N-terminus, the 332-residue chain is mRNA-decapping enzyme 1 (332 aa).

The span at 141 to 173 (ARAAKAASEAPQASVPAPTQAPAAPAQAPQMAP) shows a compositional bias: low complexity. The disordered stretch occupies residues 141 to 175 (ARAAKAASEAPQASVPAPTQAPAAPAQAPQMAPQA).

This sequence belongs to the DCP1 family. As to quaternary structure, may be a component of the decapping complex composed of dcap-1 and dcap-2. In terms of tissue distribution, expressed in neurons including touch receptor neurons and motor neurons.

Its subcellular location is the cytoplasm. The protein resides in the cytoplasmic granule. Component of the decapping complex necessary for the degradation of mRNAs, both in normal mRNA turnover and in nonsense-mediated mRNA decay. In contrast to orthologs, does not possess decapping activity and does not remove the 7-methyl guanine cap structure from mRNA molecules. In the nervous system, negatively regulates the expression of insulin-like peptide ins-7, which in turn promotes longevity. This may in part be through promoting the activity of daf-16 in distal tissues. Required for the developmental axon guidance and regrowth of PLM touch receptor neurons. In ADL sensory neurons, plays a role in ciliary shape formation. Acts in neurons to promote larval survival at high temperatures by negatively regulating lin-14 expression. The polypeptide is mRNA-decapping enzyme 1 (Caenorhabditis elegans).